The primary structure comprises 1407 residues: YEATS domain-containing protein 2 (1407 aa).

Lysine 9 is covalently cross-linked (Glycyl lysine isopeptide (Lys-Gly) (interchain with G-Cter in SUMO2)). Positions 54–80 (MKNKEHEIDVIDQRLIEARRMMDKLRA) form a coiled coil. Residue lysine 113 forms a Glycyl lysine isopeptide (Lys-Gly) (interchain with G-Cter in SUMO2) linkage. The interval 116 to 196 (LESPSRSSSP…SHKRELRNAD (81 aa)) is disordered. A phosphoserine mark is found at serine 118, serine 120, and serine 157. Residues 119 to 148 (PSRSSSPTNQRSETPSANHSESDSLSQHND) show a composition bias toward polar residues. Basic and acidic residues predominate over residues 149–165 (FLSDKDNNSNVDVEERP). A Glycyl lysine isopeptide (Lys-Gly) (interchain with G-Cter in SUMO2) cross-link involves residue lysine 189. The YEATS domain occupies 201-346 (ETSRLFVKKT…EDSVYPQSSE (146 aa)). Histone H3K27cr binding regions lie at residues 260–262 (HPS) and 283–285 (WGE). Position 406 is a phosphothreonine (threonine 406). 5 positions are modified to phosphoserine: serine 446, serine 462, serine 464, serine 470, and serine 472. The interval 462 to 540 (SGSPISTPSP…GTGSPIPKIH (79 aa)) is disordered. Threonine 477 is subject to Phosphothreonine. Lysine 486 is covalently cross-linked (Glycyl lysine isopeptide (Lys-Gly) (interchain with G-Cter in SUMO2)). The segment covering 511-520 (STPSTGSPTS) has biased composition (low complexity). The residue at position 534 (serine 534) is a Phosphoserine. Lysine 550 participates in a covalent cross-link: Glycyl lysine isopeptide (Lys-Gly) (interchain with G-Cter in SUMO2). The residue at position 573 (serine 573) is a Phosphoserine. A Glycyl lysine isopeptide (Lys-Gly) (interchain with G-Cter in SUMO2) cross-link involves residue lysine 590. Serine 625 is subject to Phosphoserine. Residues lysine 647 and lysine 771 each participate in a glycyl lysine isopeptide (Lys-Gly) (interchain with G-Cter in SUMO2) cross-link. The interval 791 to 833 (SGSAAAGGSGSSGAGGGSGGGGGSGAGGTPSTSGPGGGPQHLT) is disordered. Residues 795–829 (AAGGSGSSGAGGGSGGGGGSGAGGTPSTSGPGGGP) are compositionally biased toward gly residues. Lysine 908 participates in a covalent cross-link: Glycyl lysine isopeptide (Lys-Gly) (interchain with G-Cter in SUMO2). Lysine 1095 participates in a covalent cross-link: Glycyl lysine isopeptide (Lys-Gly) (interchain with G-Cter in SUMO1); alternate. A Glycyl lysine isopeptide (Lys-Gly) (interchain with G-Cter in SUMO2); alternate cross-link involves residue lysine 1095. Lysine 1115 participates in a covalent cross-link: Glycyl lysine isopeptide (Lys-Gly) (interchain with G-Cter in SUMO2). The residue at position 1204 (threonine 1204) is a Phosphothreonine. Glycyl lysine isopeptide (Lys-Gly) (interchain with G-Cter in SUMO2) cross-links involve residues lysine 1207 and lysine 1270.

Component of the ADA2A-containing complex (ATAC), composed of KAT14, KAT2A, TADA2L, TADA3L, ZZ3, MBIP, WDR5, YEATS2, SGF29 and DR1.

The protein resides in the nucleus. In terms of biological role, chromatin reader component of the ATAC complex, a complex with histone acetyltransferase activity on histones H3 and H4. YEATS2 specifically recognizes and binds histone H3 crotonylated at 'Lys-27' (H3K27cr). Crotonylation marks active promoters and enhancers and confers resistance to transcriptional repressors. The chain is YEATS domain-containing protein 2 from Mus musculus (Mouse).